The sequence spans 57 residues: Ribosome modulation factor 2 (57 aa).

Residues 1–24 (MKRQKRDKLGRAHSNGYQAGLGGK) form a disordered region.

This sequence belongs to the ribosome modulation factor family.

It is found in the cytoplasm. Functionally, during stationary phase, converts 70S ribosomes to an inactive dimeric form (100S ribosomes). This is Ribosome modulation factor 2 from Colwellia psychrerythraea (strain 34H / ATCC BAA-681) (Vibrio psychroerythus).